Consider the following 724-residue polypeptide: Catalase-peroxidase (724 aa).

A cross-link (tryptophyl-tyrosyl-methioninium (Trp-Tyr) (with M-252)) is located at residues 98-226; sequence WHAAGSYRTA…LAAVQMGLIY (129 aa). Histidine 99 (proton acceptor) is an active-site residue. Residues 226–252 constitute a cross-link (tryptophyl-tyrosyl-methioninium (Tyr-Met) (with W-98)); the sequence is YVNPQGVNGEPDPLRTALHVRETFARM. A heme b-binding site is contributed by histidine 267.

The protein belongs to the peroxidase family. Peroxidase/catalase subfamily. Homodimer or homotetramer. The cofactor is heme b. In terms of processing, formation of the three residue Trp-Tyr-Met cross-link is important for the catalase, but not the peroxidase activity of the enzyme.

The catalysed reaction is H2O2 + AH2 = A + 2 H2O. The enzyme catalyses 2 H2O2 = O2 + 2 H2O. Functionally, bifunctional enzyme with both catalase and broad-spectrum peroxidase activity. The chain is Catalase-peroxidase from Cereibacter sphaeroides (strain ATCC 17025 / ATH 2.4.3) (Rhodobacter sphaeroides).